A 323-amino-acid chain; its full sequence is Di/tripeptide transport ATP-binding protein DppF (323 aa).

Positions 5–254 (LTARDLTRHY…PLHPYTRALL (250 aa)) constitute an ABC transporter domain. ATP is bound at residue 47-54 (GESGCGKS).

This sequence belongs to the ABC transporter superfamily. In terms of assembly, the complex is composed of two ATP-binding proteins (DppD and DppF), two transmembrane proteins (DppB and DppC) and a solute-binding protein (DppA1-A5). Five orthologous SBPs (DppA1-A5) are present in P.aeruginosa, which increases the substrate specificity of the DppBCDF transporter.

The protein resides in the cell inner membrane. It carries out the reaction a dipeptide(out) + ATP + H2O = a dipeptide(in) + ADP + phosphate + H(+). Functionally, part of the ABC transporter DppABCDF involved in the uptake of various di/tripeptides. Is also involved in the uptake of phaseolotoxin, a toxic tripeptide inhibiting the enzyme ornithine carbamoyltransferase. Responsible for energy coupling to the transport system. This Pseudomonas aeruginosa (strain UCBPP-PA14) protein is Di/tripeptide transport ATP-binding protein DppF.